The primary structure comprises 42 residues: Photosystem I reaction center subunit IX (42 aa).

Residues 7 to 27 traverse the membrane as a helical segment; that stretch reads YLSTAPVLAAVWFGFLAGLLI.

The protein belongs to the PsaJ family.

The protein resides in the plastid. It localises to the chloroplast thylakoid membrane. May help in the organization of the PsaE and PsaF subunits. This chain is Photosystem I reaction center subunit IX, found in Nephroselmis olivacea (Green alga).